We begin with the raw amino-acid sequence, 508 residues long: Transposase (508 aa).

The region spanning 3-65 is the HTH IS21-type domain; it reads LLSVIRRWHF…PFADRLSAWL (63 aa). Positions 124–299 constitute an Integrase catalytic domain; it reads LAFEPGEAFQ…TIADIWVEEV (176 aa).

This sequence belongs to the transposase IS21/IS408/IS1162 family.

Functionally, required for the transposition of the insertion element. The chain is Transposase (nmoT) from Aminobacter aminovorans (Chelatobacter heintzii).